The following is a 103-amino-acid chain: Co-chaperonin GroES (103 aa).

The protein belongs to the GroES chaperonin family. In terms of assembly, heptamer of 7 subunits arranged in a ring. Interacts with the chaperonin GroEL.

The protein resides in the cytoplasm. Functionally, together with the chaperonin GroEL, plays an essential role in assisting protein folding. The GroEL-GroES system forms a nano-cage that allows encapsulation of the non-native substrate proteins and provides a physical environment optimized to promote and accelerate protein folding. GroES binds to the apical surface of the GroEL ring, thereby capping the opening of the GroEL channel. The chain is Co-chaperonin GroES from Synechococcus sp. (strain JA-2-3B'a(2-13)) (Cyanobacteria bacterium Yellowstone B-Prime).